Here is a 344-residue protein sequence, read N- to C-terminus: 2-aminoethylphosphonate--pyruvate transaminase (344 aa).

Residue Lys194 is modified to N6-(pyridoxal phosphate)lysine.

This sequence belongs to the class-V pyridoxal-phosphate-dependent aminotransferase family. PhnW subfamily. As to quaternary structure, homodimer. Requires pyridoxal 5'-phosphate as cofactor.

The catalysed reaction is (2-aminoethyl)phosphonate + pyruvate = phosphonoacetaldehyde + L-alanine. In terms of biological role, involved in phosphonate degradation. This is 2-aminoethylphosphonate--pyruvate transaminase from Bacillus cereus.